The chain runs to 422 residues: 26S proteasome non-ATPase regulatory subunit 11B (422 aa).

Residues 228–392 (AYSYFFEAFE…DVLIIFEEPP (165 aa)) form the PCI domain.

Belongs to the proteasome subunit S9 family. In terms of assembly, component of the lid subcomplex of the 19S proteasome regulatory particle complex (also named PA700 complex). The 26S proteasome consists of a 20S proteasome core and two 19S regulatory subunits.

It localises to the nucleus. The protein localises to the cytoplasm. The protein resides in the cytosol. Functionally, component of the lid subcomplex of the 26S proteasome, a multiprotein complex involved in the ATP-dependent degradation of ubiquitinated proteins. In the complex, psmd11b is required for proteasome assembly. The chain is 26S proteasome non-ATPase regulatory subunit 11B (psmd11b) from Danio rerio (Zebrafish).